Here is a 186-residue protein sequence, read N- to C-terminus: ATP synthase subunit delta (186 aa).

It belongs to the ATPase delta chain family. In terms of assembly, F-type ATPases have 2 components, F(1) - the catalytic core - and F(0) - the membrane proton channel. F(1) has five subunits: alpha(3), beta(3), gamma(1), delta(1), epsilon(1). F(0) has three main subunits: a(1), b(2) and c(10-14). The alpha and beta chains form an alternating ring which encloses part of the gamma chain. F(1) is attached to F(0) by a central stalk formed by the gamma and epsilon chains, while a peripheral stalk is formed by the delta and b chains.

The protein resides in the cell inner membrane. Functionally, f(1)F(0) ATP synthase produces ATP from ADP in the presence of a proton or sodium gradient. F-type ATPases consist of two structural domains, F(1) containing the extramembraneous catalytic core and F(0) containing the membrane proton channel, linked together by a central stalk and a peripheral stalk. During catalysis, ATP synthesis in the catalytic domain of F(1) is coupled via a rotary mechanism of the central stalk subunits to proton translocation. Its function is as follows. This protein is part of the stalk that links CF(0) to CF(1). It either transmits conformational changes from CF(0) to CF(1) or is implicated in proton conduction. The sequence is that of ATP synthase subunit delta from Wolbachia sp. subsp. Drosophila simulans (strain wRi).